Consider the following 77-residue polypeptide: MKLIILTGLVLFAIVSLIEAEEESGRACILLYGECTKASGSCCSNLICDCYRKLKKGVQIARQCFCLEKDVVYKKHI.

The first 20 residues, 1–20, serve as a signal peptide directing secretion; it reads MKLIILTGLVLFAIVSLIEA. Residues 21–26 constitute a propeptide that is removed on maturation; sequence EEESGR.

Belongs to the neurotoxin 19 (CSTX) family. 10 (U11-Lctx) subfamily. In terms of processing, contains 4 disulfide bonds. As to expression, expressed by the venom gland.

It is found in the secreted. In Lycosa singoriensis (Wolf spider), this protein is U11-lycotoxin-Ls1a.